The sequence spans 326 residues: Phosphotriesterase homology protein (326 aa).

Positions 22, 24, 145, 178, 207, and 264 each coordinate Zn(2+). The residue at position 145 (K145) is an N6-carboxylysine.

It belongs to the metallo-dependent hydrolases superfamily. Phosphotriesterase family. It depends on Zn(2+) as a cofactor.

This Mycobacterium tuberculosis (strain CDC 1551 / Oshkosh) protein is Phosphotriesterase homology protein (php).